Reading from the N-terminus, the 714-residue chain is MKITYCDALIIGGGLAGLRASIACKQKGLNTIVLSLVPVRRSHSAAAQGGMQASLANAKKSEGDNEDLHFLDTVKGSDWGCDQQVARMFVTTAPKAIRELASWGVPWTRIKKGDRPAVVNGEHVIITERDDRHGYILSRDFGGTKKWRTCFTADATGHTMLYAVANEALHHKVDIQDRKDMLAFIHHDNKCYGAVVRDLITGEISAYVSKGTLLATGGYGRVYKHTTNAVICDGAGAASALETGVAKLGNMEAVQFHPTALVPSGILMTEGCRGDGGVLRDKFGRRFMPAYEPEKKELASRDVVSRRILEHIQKGYGAKSPYGDHVWLDIAILGRNHVEKNLRDVRDIAMTFAGIDPADSEEQTKDNMQGAPTNEPEYGQAMAKQKGWIPIKPMQHYSMGGVRTNPKGETHLKGLFCAGEAACWDLHGFNRLGGNSVSEPVVAGMIIGDYFASHCLEAQIEINTQKVEAFIKESQDYMHFLLHNEGKEDVYEIRERMKEVMDEKVGVFREGKKLEEALKELQELYARSKNICVKNKVLHNNPELEDAYRTKKMLKLALCITQGALLRTESRGAHTRIDYPKRDDEKWLNRTLASWPSAEQDMPTIEYEELDVMKMEISPDFRGYGKKGNFIPHPKKEERDAEILKTILELEKLGKDRIEVQHALMPFELQEKYKARNMRLEDEEVRARGEHLYSFNVHDLLDQHNANLKGEHHE.

FAD contacts are provided by residues 13–16, 42–44, and 49–50; these read GGLA, SHS, and GG. H43 is subject to Tele-8alpha-FAD histidine. Residues H257 and R273 contribute to the active site. FAD contacts are provided by residues E420 and 436-437; that span reads SV.

It belongs to the FAD-dependent oxidoreductase 2 family. FRD/SDH subfamily. As to quaternary structure, part of an enzyme complex containing three subunits: a flavoprotein (frdA), an iron-sulfur protein (frdB), and diheme cytochrome b (frdC). The cofactor is FAD.

It localises to the cell inner membrane. The enzyme catalyses a quinone + succinate = fumarate + a quinol. In terms of biological role, the fumarate reductase enzyme complex is required for fumarate respiration. The chain is Fumarate reductase flavoprotein subunit (frdA) from Helicobacter pylori (strain J99 / ATCC 700824) (Campylobacter pylori J99).